A 302-amino-acid polypeptide reads, in one-letter code: Oxaloacetate decarboxylase 2 (302 aa).

Serine 50 serves as a coordination point for substrate. Aspartate 88 contacts Mg(2+). Residues arginine 159 and histidine 235 each contribute to the substrate site.

It belongs to the isocitrate lyase/PEP mutase superfamily. Oxaloacetate decarboxylase family. In terms of assembly, homotetramer; dimer of dimers. The cofactor is Mg(2+).

The enzyme catalyses oxaloacetate + H(+) = pyruvate + CO2. Functionally, catalyzes the decarboxylation of oxaloacetate into pyruvate. Seems to play a role in maintaining cellular concentrations of bicarbonate and pyruvate. This Pseudomonas putida (strain W619) protein is Oxaloacetate decarboxylase 2.